We begin with the raw amino-acid sequence, 32 residues long: Photosystem II reaction center protein Z (32 aa).

Residues 9–31 (FILLGAVTWAILVFIVGSLNSYV) traverse the membrane as a helical segment.

The protein belongs to the PsbZ family. PSII is composed of 1 copy each of membrane proteins PsbA, PsbB, PsbC, PsbD, PsbE, PsbF, PsbH, PsbI, PsbJ, PsbK, PsbL, PsbM, PsbT, PsbY, PsbZ, Psb30/Ycf12, at least 3 peripheral proteins of the oxygen-evolving complex and a large number of cofactors. It forms dimeric complexes.

The protein localises to the plastid. It is found in the chloroplast thylakoid membrane. May control the interaction of photosystem II (PSII) cores with the light-harvesting antenna, regulates electron flow through the 2 photosystem reaction centers. PSII is a light-driven water plastoquinone oxidoreductase, using light energy to abstract electrons from H(2)O, generating a proton gradient subsequently used for ATP formation. The protein is Photosystem II reaction center protein Z of Euglena stellata.